The primary structure comprises 232 residues: Orotidine 5'-phosphate decarboxylase (232 aa).

Substrate is bound by residues aspartate 13, lysine 35, 62–71 (DLKFHDIPNT), threonine 121, arginine 182, glutamine 191, glycine 211, and arginine 212. Lysine 64 (proton donor) is an active-site residue.

Belongs to the OMP decarboxylase family. Type 1 subfamily. Homodimer.

It carries out the reaction orotidine 5'-phosphate + H(+) = UMP + CO2. It functions in the pathway pyrimidine metabolism; UMP biosynthesis via de novo pathway; UMP from orotate: step 2/2. Functionally, catalyzes the decarboxylation of orotidine 5'-monophosphate (OMP) to uridine 5'-monophosphate (UMP). The polypeptide is Orotidine 5'-phosphate decarboxylase (Acinetobacter baumannii (strain AB0057)).